A 122-amino-acid chain; its full sequence is Large ribosomal subunit protein uL14 (122 aa).

Belongs to the universal ribosomal protein uL14 family. Part of the 50S ribosomal subunit. Forms a cluster with proteins L3 and L19. In the 70S ribosome, L14 and L19 interact and together make contacts with the 16S rRNA in bridges B5 and B8.

In terms of biological role, binds to 23S rRNA. Forms part of two intersubunit bridges in the 70S ribosome. The chain is Large ribosomal subunit protein uL14 from Rippkaea orientalis (strain PCC 8801 / RF-1) (Cyanothece sp. (strain PCC 8801)).